Reading from the N-terminus, the 227-residue chain is Esterase Rv3036c (227 aa).

The chain crosses the membrane as a helical span at residues 3–23; sequence YLIATAVLVAVVLVGWPAAGA.

The protein belongs to the RsiV family.

It is found in the cell membrane. The protein localises to the secreted. Its subcellular location is the cell wall. The enzyme catalyses a fatty acid ester + H2O = an aliphatic alcohol + a fatty acid + H(+). The catalysed reaction is an acetyl ester + H2O = an aliphatic alcohol + acetate + H(+). It catalyses the reaction a butanoate ester + H2O = an aliphatic alcohol + butanoate + H(+). It carries out the reaction a hexanoate ester + H2O = an aliphatic alcohol + hexanoate + H(+). The enzyme catalyses a dodecanoate ester + H2O = an aliphatic alcohol + dodecanoate + H(+). The catalysed reaction is a tetradecanoate ester + H2O = an aliphatic alcohol + tetradecanoate + H(+). It catalyses the reaction an octanoate ester + H2O = an aliphatic alcohol + octanoate + H(+). In terms of biological role, hydrolyzes ester substrates carbon chain lengths ranging from C2 to C14. In vitro, acetate (C2), butyrate (C4) and caprylate (C6) are hydrolyzed with high efficiency. Has lower activity against laurate (C12), myristate (C14) and caproate (C8), and weak activity against palmitate (C16). This Mycobacterium tuberculosis (strain ATCC 25618 / H37Rv) protein is Esterase Rv3036c.